The chain runs to 449 residues: Phosphoglucosamine mutase (449 aa).

Ser101 (phosphoserine intermediate) is an active-site residue. Ser101, Asp242, Asp244, and Asp246 together coordinate Mg(2+). Ser101 bears the Phosphoserine mark.

It belongs to the phosphohexose mutase family. Mg(2+) is required as a cofactor. Post-translationally, activated by phosphorylation.

It carries out the reaction alpha-D-glucosamine 1-phosphate = D-glucosamine 6-phosphate. Catalyzes the conversion of glucosamine-6-phosphate to glucosamine-1-phosphate. This is Phosphoglucosamine mutase from Bradyrhizobium sp. (strain ORS 278).